Here is a 222-residue protein sequence, read N- to C-terminus: Ribonuclease HII (222 aa).

Residues Asp-17–Ser-206 enclose the RNase H type-2 domain. 3 residues coordinate a divalent metal cation: Asp-23, Glu-24, and Asp-115.

This sequence belongs to the RNase HII family. It depends on Mn(2+) as a cofactor. The cofactor is Mg(2+).

It is found in the cytoplasm. It carries out the reaction Endonucleolytic cleavage to 5'-phosphomonoester.. Functionally, endonuclease that specifically degrades the RNA of RNA-DNA hybrids. This chain is Ribonuclease HII, found in Pseudomonas savastanoi pv. phaseolicola (strain 1448A / Race 6) (Pseudomonas syringae pv. phaseolicola (strain 1448A / Race 6)).